We begin with the raw amino-acid sequence, 528 residues long: U3 small nucleolar RNA-associated protein 15 homolog (528 aa).

Residue Ala2 is modified to N-acetylalanine. 7 WD repeats span residues 36-75 (KEFG…PVKT), 78-117 (RFKD…PLRQ), 120-159 (GHTK…EILT), 162-202 (EHSD…NVLC), 204-242 (EHGQ…QLLV), 246-285 (NHHK…VVHS), and 287-326 (DYAA…KKES). Lys249 participates in a covalent cross-link: Glycyl lysine isopeptide (Lys-Gly) (interchain with G-Cter in SUMO2). The tract at residues 508–528 (AELPEEKTESPRQPSDTDKNS) is disordered. Over residues 511–528 (PEEKTESPRQPSDTDKNS) the composition is skewed to basic and acidic residues.

In terms of assembly, part of the small subunit (SSU) processome, composed of more than 70 proteins and the RNA chaperone small nucleolar RNA (snoRNA) U3. May be a component of the proposed t-UTP subcomplex of the ribosomal small subunit (SSU) processome containing at least UTP4, WDR43, HEATR1, UTP15, WDR75. Interacts directly with UTP4 and WDR43.

It localises to the nucleus. The protein localises to the nucleolus. In terms of biological role, ribosome biogenesis factor. Involved in nucleolar processing of pre-18S ribosomal RNA. Required for optimal pre-ribosomal RNA transcription by RNA polymerase I. Part of the small subunit (SSU) processome, first precursor of the small eukaryotic ribosomal subunit. During the assembly of the SSU processome in the nucleolus, many ribosome biogenesis factors, an RNA chaperone and ribosomal proteins associate with the nascent pre-rRNA and work in concert to generate RNA folding, modifications, rearrangements and cleavage as well as targeted degradation of pre-ribosomal RNA by the RNA exosome. The polypeptide is U3 small nucleolar RNA-associated protein 15 homolog (Rattus norvegicus (Rat)).